The following is a 106-amino-acid chain: Large ribosomal subunit protein eL42 (106 aa).

It belongs to the eukaryotic ribosomal protein eL42 family.

This is Large ribosomal subunit protein eL42 (RPL44) from Schwanniomyces occidentalis (Yeast).